A 300-amino-acid polypeptide reads, in one-letter code: Probable amino-acid ABC transporter periplasmic-binding protein y4tE (300 aa).

Residues 1-27 (MTHLKISKTAPAVARFLPAGRIASVAA) form the signal peptide.

It belongs to the bacterial solute-binding protein 3 family.

It is found in the periplasm. Probably part of the binding-protein-dependent transport system y4tEFGH for an amino acid. In Sinorhizobium fredii (strain NBRC 101917 / NGR234), this protein is Probable amino-acid ABC transporter periplasmic-binding protein y4tE.